The following is a 368-amino-acid chain: Heme A synthase (368 aa).

A run of 5 helical transmembrane segments spans residues 14-34 (AVRI…LVGG), 104-124 (VIGI…AIGP), 129-149 (ALWI…WMVA), 161-181 (VRLA…VWTL), and 200-220 (ALAL…VAGL). Residue histidine 264 participates in heme binding. Helical transmembrane passes span 266–283 (MLAY…IDAL), 296–316 (FLAL…AAPI), and 318–338 (LALV…LQAE). Histidine 322 contributes to the heme binding site.

It belongs to the COX15/CtaA family. Type 2 subfamily. Interacts with CtaB. Requires heme b as cofactor.

It localises to the cell membrane. The enzyme catalyses Fe(II)-heme o + 2 A + H2O = Fe(II)-heme a + 2 AH2. It participates in porphyrin-containing compound metabolism; heme A biosynthesis; heme A from heme O: step 1/1. Functionally, catalyzes the conversion of heme O to heme A by two successive hydroxylations of the methyl group at C8. The first hydroxylation forms heme I, the second hydroxylation results in an unstable dihydroxymethyl group, which spontaneously dehydrates, resulting in the formyl group of heme A. In Rhodopseudomonas palustris (strain ATCC BAA-98 / CGA009), this protein is Heme A synthase.